Reading from the N-terminus, the 425-residue chain is Cytokine receptor-like factor 1 (425 aa).

Residues 1 to 33 form the signal peptide; sequence MPAGRPGPVAQSARRPPRPLSSLWSPLLLCVLG. The region spanning 35–134 is the Ig-like C2-type domain; sequence PRGGSGAHTA…SILAGSCLYV (100 aa). N-linked (GlcNAc...) asparagine glycosylation is found at Asn-95, Asn-107, and Asn-143. Fibronectin type-III domains are found at residues 140–235 and 240–344; these read KPFN…VLDV and PPPD…TPRS. Cys-146 and Cys-156 form a disulfide bridge. N-linked (GlcNAc...) asparagine glycosylation occurs at Asn-171. The cysteines at positions 187 and 198 are disulfide-linked. Ser-222 is modified (phosphoserine). An N-linked (GlcNAc...) asparagine glycan is attached at Asn-295. The WSXWS motif signature appears at 330 to 334; sequence WSEWS. The tract at residues 335–366 is disordered; that stretch reads HPTAASTPRSERPGPGGGVCEPRGGEPSSGPV. Asn-385 carries N-linked (GlcNAc...) asparagine glycosylation. Residues 402–425 form a disordered region; the sequence is HKTRNQDEGILPSGRRGAARGPAG. The segment covering 415–425 has biased composition (low complexity); the sequence is GRRGAARGPAG.

Belongs to the type I cytokine receptor family. Type 3 subfamily. In terms of assembly, forms covalent di- and tetramers. Forms a heteromeric complex with cardiotrophin-like cytokine CLCF1/CLC; the CRLF1-CLCF1 complex is a ligand for the ciliary neurotrophic factor receptor/CNTFR. The CRLF1-CLCF1 heterodimer, as well as tripartite signaling complex formed by CRLF1, CLCF1 and CNTFR bind SORL1 (via N-terminal ectodomain); within this complex, the interaction is mediated predominantly by the CRLF1 moiety. In terms of tissue distribution, widely expressed in the embryo. Not detected in the brain of adult mice.

The protein resides in the secreted. Its function is as follows. In complex with CLCF1, forms a heterodimeric neurotropic cytokine that plays a crucial role during neuronal development. Plays a role in the initiation and/or maintenance of suckling in neonatal mice. May also play a regulatory role in the immune system. This chain is Cytokine receptor-like factor 1 (Crlf1), found in Mus musculus (Mouse).